The following is a 564-amino-acid chain: Septation ring formation regulator EzrA (564 aa).

Over 1–4 (MVLF) the chain is Extracellular. The helical transmembrane segment at 5–23 (IILAILVVILIAIGVLFYM) threads the bilayer. Residues 24–564 (RSNKRNLIEK…KHIEEQVIKE (541 aa)) are Cytoplasmic-facing. Coiled-coil stretches lie at residues 84–126 (VEEK…HQVT), 165–223 (EAAE…LIRE), 271–303 (MISR…YEVK), and 350–435 (VRQF…RRLL).

This sequence belongs to the EzrA family.

The protein resides in the cell membrane. Negative regulator of FtsZ ring formation; modulates the frequency and position of FtsZ ring formation. Inhibits FtsZ ring formation at polar sites. Interacts either with FtsZ or with one of its binding partners to promote depolymerization. This is Septation ring formation regulator EzrA from Staphylococcus epidermidis (strain ATCC 12228 / FDA PCI 1200).